The sequence spans 427 residues: MAMKVTGGFILDENGEQVAKDVYIKDGKIVEHVADGDIRQQFDATGLLISPGFVDVHVHLREPGGEKKETIETGTKAAARGGFTTVAAMPNTRPVPDNAEQLDLLQARISETAVVRVLPYASITTRQLGQELTDFKALKEAGAFAFTDDGVGIQEAGMMLSAMKEAAALNMAVVAHCEDNSLINGGAVHEGHYAKAHGLNGIPSVCEAVHIARDVLLAEAAGAHYHVCHVSTKESVRTIRDAKKAGIRVTAEVTPHHLLLCEDDIIGKDPNFKMNPPLRAKEDRDALVAGLLDGTIDFIATDHAPHTAEEKSASLERAPFGIVGLETAFPLLYTHFVKPGTFTLKQLIDWLTVKPAQTFNLPYGTLQVGAAADLTLIDLKANETIDPSMFLSKGKNTPFAGWDCAGIPQATMVAGKTVYKKERITNE.

Positions 57 and 59 each coordinate Zn(2+). Substrate is bound by residues His59–Arg61 and Asn91. The Zn(2+) site is built by Asp149, His176, and His229. Residue Asn275 participates in substrate binding. Asp302 is a Zn(2+) binding site. Residue Asp302 is part of the active site. Substrate is bound by residues His306 and Phe320–Gly321.

This sequence belongs to the metallo-dependent hydrolases superfamily. DHOase family. Class I DHOase subfamily. The cofactor is Zn(2+).

The catalysed reaction is (S)-dihydroorotate + H2O = N-carbamoyl-L-aspartate + H(+). Its pathway is pyrimidine metabolism; UMP biosynthesis via de novo pathway; (S)-dihydroorotate from bicarbonate: step 3/3. Catalyzes the reversible cyclization of carbamoyl aspartate to dihydroorotate. This Shouchella clausii (strain KSM-K16) (Alkalihalobacillus clausii) protein is Dihydroorotase.